The primary structure comprises 198 residues: Cell division protein SepF (198 aa).

The interval 170 to 198 (EVPQPPARPARPASTNPPAWGNETNRMAQ) is disordered. A compositionally biased stretch (low complexity) spans 179–188 (ARPASTNPPA).

It belongs to the SepF family. Homodimer. Interacts with FtsZ.

It localises to the cytoplasm. Cell division protein that is part of the divisome complex and is recruited early to the Z-ring. Probably stimulates Z-ring formation, perhaps through the cross-linking of FtsZ protofilaments. Its function overlaps with FtsA. The polypeptide is Cell division protein SepF (Trichormus variabilis (strain ATCC 29413 / PCC 7937) (Anabaena variabilis)).